The chain runs to 117 residues: Ig heavy chain V region MOO (117 aa).

The Ig-like domain occupies 1–116; that stretch reads EVKLVESGGD…FGQGTIVTVS (116 aa).

This Canis lupus familiaris (Dog) protein is Ig heavy chain V region MOO.